The sequence spans 437 residues: Trigger factor (437 aa).

The PPIase FKBP-type domain occupies 161–246; the sequence is GDRVNIDFKG…VNKVEGKALP (86 aa).

This sequence belongs to the FKBP-type PPIase family. Tig subfamily.

It localises to the cytoplasm. The catalysed reaction is [protein]-peptidylproline (omega=180) = [protein]-peptidylproline (omega=0). Functionally, involved in protein export. Acts as a chaperone by maintaining the newly synthesized protein in an open conformation. Functions as a peptidyl-prolyl cis-trans isomerase. This is Trigger factor from Alcanivorax borkumensis (strain ATCC 700651 / DSM 11573 / NCIMB 13689 / SK2).